A 74-amino-acid chain; its full sequence is Spore germination protein GerE (74 aa).

An HTH luxR-type domain is found at 5 to 70 (EFQSKPLLTK…QAVVELLRMG (66 aa)). Positions 29–48 (TKEIASELFISEKTVRNHIS) form a DNA-binding region, H-T-H motif.

Its function is as follows. Involved in the regulation of spore formation. Directs the transcription of several genes that encode structural components of the protein coat that encases the mature spore (CotB, CotC, CotG, CotS, CotV, CotW, CotX, CotY and CotZ). Also controls the cgeAB and cgeCDE operons. This is Spore germination protein GerE (gerE) from Bacillus subtilis (strain 168).